Reading from the N-terminus, the 603-residue chain is Vacuolar protein sorting-associated protein 33A (603 aa).

Belongs to the STXBP/unc-18/SEC1 family. Probable component of the homotypic fusion and vacuole protein sorting (HOPS) complex consisting of the core class C Vps proteins vps-11, vps-16, vps-18, and which further associates with vps-33.1, vps-39 and vps-41. Interacts with spe-39. As to expression, ubiquitously expressed at high levels in somatic tissues including the pharynx, muscles, hypodermis, neurons, coelomocytes and spermatheca. Expressed in the intestine.

Its subcellular location is the lysosome. The protein localises to the early endosome. The protein resides in the late endosome. It localises to the apical cell membrane. Its function is as follows. Plays a role in vesicle-mediated protein trafficking to lysosomal compartments including the endocytic membrane transport pathways. Believed to act as a component of the putative HOPS endosomal tethering complex which is proposed to be involved in the rab-5-to-rab-7 endosome conversion probably implicating sand-1, and via binding SNAREs and SNARE complexes to mediate tethering and docking events during SNARE-mediated membrane fusion. The HOPS complex is proposed to be recruited to rab-7 on the late endosomal membrane and to regulate late endocytic, phagocytic and autophagic traffic towards lysosomes. Within the HOPS complex, contributes to the normal development of gut granules in embryonic and adult intestinal cells. Required for endosome/lysosome fusion. Required for early embryonic development. This Caenorhabditis elegans protein is Vacuolar protein sorting-associated protein 33A.